A 168-amino-acid chain; its full sequence is 3-hydroxyacyl-[acyl-carrier-protein] dehydratase FabZ (168 aa).

The active site involves histidine 54.

This sequence belongs to the thioester dehydratase family. FabZ subfamily.

It is found in the cytoplasm. The enzyme catalyses a (3R)-hydroxyacyl-[ACP] = a (2E)-enoyl-[ACP] + H2O. Involved in unsaturated fatty acids biosynthesis. Catalyzes the dehydration of short chain beta-hydroxyacyl-ACPs and long chain saturated and unsaturated beta-hydroxyacyl-ACPs. The chain is 3-hydroxyacyl-[acyl-carrier-protein] dehydratase FabZ from Yersinia enterocolitica serotype O:8 / biotype 1B (strain NCTC 13174 / 8081).